We begin with the raw amino-acid sequence, 100 residues long: Urease subunit gamma (100 aa).

This sequence belongs to the urease gamma subunit family. As to quaternary structure, heterotrimer of UreA (gamma), UreB (beta) and UreC (alpha) subunits. Three heterotrimers associate to form the active enzyme.

It is found in the cytoplasm. The enzyme catalyses urea + 2 H2O + H(+) = hydrogencarbonate + 2 NH4(+). It functions in the pathway nitrogen metabolism; urea degradation; CO(2) and NH(3) from urea (urease route): step 1/1. In Flavobacterium johnsoniae (strain ATCC 17061 / DSM 2064 / JCM 8514 / BCRC 14874 / CCUG 350202 / NBRC 14942 / NCIMB 11054 / UW101) (Cytophaga johnsonae), this protein is Urease subunit gamma.